The chain runs to 200 residues: GTP-binding protein rho5 (200 aa).

13-20 (GDGACGKT) lines the GTP pocket. The Effector region motif lies at 35 to 43 (YVPTVFENY). Residues 60-64 (DTAGQ) and 118-121 (CKVD) contribute to the GTP site. Residue Cys197 is modified to Cysteine methyl ester. Cys197 is lipidated: S-geranylgeranyl cysteine. Positions 198-200 (ILL) are cleaved as a propeptide — removed in mature form.

This sequence belongs to the small GTPase superfamily. Rho family.

The protein resides in the cell membrane. The chain is GTP-binding protein rho5 (rho5) from Schizosaccharomyces pombe (strain 972 / ATCC 24843) (Fission yeast).